Here is a 73-residue protein sequence, read N- to C-terminus: Cx9C motif-containing protein 4, mitochondrial (73 aa).

Residues 2 to 44 form the CHCH domain; sequence SNPCQKEACAIQDCLLSHQYDDAKCAKVIDQLYICCSKFYNDN. 2 consecutive short sequence motifs (cx9C motif) follow at residues 5-15 and 26-36; these read CQKEACAIQDC and CAKVIDQLYIC. Disulfide bonds link cysteine 5-cysteine 36 and cysteine 15-cysteine 26.

This sequence belongs to the CMC4 family.

It is found in the mitochondrion intermembrane space. This Saccharomyces cerevisiae (strain ATCC 204508 / S288c) (Baker's yeast) protein is Cx9C motif-containing protein 4, mitochondrial (CMC4).